Reading from the N-terminus, the 73-residue chain is Translation initiation factor IF-1 (73 aa).

In terms of domain architecture, S1-like spans 1 to 72; that stretch reads MAKQDVIEME…TKGRITYRLR (72 aa).

The protein belongs to the IF-1 family. As to quaternary structure, component of the 30S ribosomal translation pre-initiation complex which assembles on the 30S ribosome in the order IF-2 and IF-3, IF-1 and N-formylmethionyl-tRNA(fMet); mRNA recruitment can occur at any time during PIC assembly.

The protein localises to the cytoplasm. Its function is as follows. One of the essential components for the initiation of protein synthesis. Stabilizes the binding of IF-2 and IF-3 on the 30S subunit to which N-formylmethionyl-tRNA(fMet) subsequently binds. Helps modulate mRNA selection, yielding the 30S pre-initiation complex (PIC). Upon addition of the 50S ribosomal subunit IF-1, IF-2 and IF-3 are released leaving the mature 70S translation initiation complex. The protein is Translation initiation factor IF-1 of Gloeobacter violaceus (strain ATCC 29082 / PCC 7421).